The sequence spans 257 residues: Folate receptor alpha (257 aa).

The N-terminal stretch at 1-24 (MAQRMTTQLLLLLVWVAVVGEAQT) is a signal peptide. 8 cysteine pairs are disulfide-bonded: C37–C65, C57–C105, C66–C109, C89–C175, C96–C146, C135–C209, C139–C189, and C152–C169. N69 carries N-linked (GlcNAc...) asparagine glycosylation. Residues D103, Y107, 124–128 (WRKER), 157–162 (HKGWNW), and S196 contribute to the folate site. N161 carries N-linked (GlcNAc...) asparagine glycosylation. A glycan (N-linked (GlcNAc...) asparagine) is linked at N201. S234 carries the GPI-anchor amidated serine lipid modification. Positions 235–257 (GAGPWAAWPFLLSLALMLLWLLS) are cleaved as a propeptide — removed in mature form.

The protein belongs to the folate receptor family. Post-translationally, the secreted form is derived from the membrane-bound form either by cleavage of the GPI anchor, or/and by proteolysis catalyzed by a metalloprotease. Primarily expressed in tissues of epithelial origin. Expression is increased in malignant tissues. Expressed in kidney, lung and cerebellum. Detected in placenta and thymus epithelium.

Its subcellular location is the cell membrane. It is found in the apical cell membrane. It localises to the basolateral cell membrane. The protein localises to the secreted. The protein resides in the cytoplasmic vesicle. Its subcellular location is the clathrin-coated vesicle. It is found in the endosome. In terms of biological role, binds to folate and reduced folic acid derivatives and mediates delivery of 5-methyltetrahydrofolate and folate analogs into the interior of cells. Has high affinity for folate and folic acid analogs at neutral pH. Exposure to slightly acidic pH after receptor endocytosis triggers a conformation change that strongly reduces its affinity for folates and mediates their release. Required for normal embryonic development and normal cell proliferation. This is Folate receptor alpha (FOLR1) from Homo sapiens (Human).